A 165-amino-acid polypeptide reads, in one-letter code: NADH-quinone oxidoreductase subunit I (165 aa).

2 consecutive 4Fe-4S ferredoxin-type domains span residues 57–86 (RRYENGEERCIACKLCEAVCPALAITIESE) and 96–125 (TRYDIDLTKCIFCGFCEESCPVDSIVETHI). [4Fe-4S] cluster-binding residues include C66, C69, C72, C76, C105, C108, C111, and C115.

It belongs to the complex I 23 kDa subunit family. As to quaternary structure, NDH-1 is composed of 14 different subunits. Subunits NuoA, H, J, K, L, M, N constitute the membrane sector of the complex. It depends on [4Fe-4S] cluster as a cofactor.

Its subcellular location is the cell inner membrane. The catalysed reaction is a quinone + NADH + 5 H(+)(in) = a quinol + NAD(+) + 4 H(+)(out). Functionally, NDH-1 shuttles electrons from NADH, via FMN and iron-sulfur (Fe-S) centers, to quinones in the respiratory chain. The immediate electron acceptor for the enzyme in this species is believed to be ubiquinone. Couples the redox reaction to proton translocation (for every two electrons transferred, four hydrogen ions are translocated across the cytoplasmic membrane), and thus conserves the redox energy in a proton gradient. This chain is NADH-quinone oxidoreductase subunit I, found in Methylibium petroleiphilum (strain ATCC BAA-1232 / LMG 22953 / PM1).